We begin with the raw amino-acid sequence, 795 residues long: Probable diacylglycerol kinase 3 (795 aa).

EF-hand domains are found at residues 170 to 205 (TPENKLDVVFHVYDSDGNGFLDKSEIDGIIEQMMNV) and 215 to 250 (ELEQVIRQMMVDIDYDNDGIVSFDEWRRGGLTNIPL). Ca(2+) contacts are provided by aspartate 183, aspartate 185, asparagine 187, glutamate 194, aspartate 228, aspartate 230, aspartate 232, and glutamate 239. 2 Phorbol-ester/DAG-type zinc fingers span residues 265-316 (SHVW…ATNC) and 329-375 (YHHW…AQEC). The 136-residue stretch at 423-558 (NDCRPLLVLV…MDRWQIKIEI (136 aa)) folds into the DAGKc domain.

It belongs to the eukaryotic diacylglycerol kinase family. In terms of assembly, monomer.

The enzyme catalyses a 1,2-diacyl-sn-glycerol + ATP = a 1,2-diacyl-sn-glycero-3-phosphate + ADP + H(+). Its function is as follows. Involved in AFD-neuron mediated thermotaxis. Regulates behavior to environmental temperature. Thought to have a role in olfactory adaptation by affecting diacylglycerol levels. The chain is Probable diacylglycerol kinase 3 (dgk-3) from Caenorhabditis elegans.